The following is a 451-amino-acid chain: 2-succinylbenzoate--CoA ligase (451 aa).

The protein belongs to the ATP-dependent AMP-binding enzyme family. MenE subfamily.

It carries out the reaction 2-succinylbenzoate + ATP + CoA = 2-succinylbenzoyl-CoA + AMP + diphosphate. It functions in the pathway quinol/quinone metabolism; 1,4-dihydroxy-2-naphthoate biosynthesis; 1,4-dihydroxy-2-naphthoate from chorismate: step 5/7. Its pathway is quinol/quinone metabolism; menaquinone biosynthesis. Converts 2-succinylbenzoate (OSB) to 2-succinylbenzoyl-CoA (OSB-CoA). This is 2-succinylbenzoate--CoA ligase from Escherichia coli (strain K12).